The primary structure comprises 352 residues: Ion-translocating oxidoreductase complex subunit D (352 aa).

Transmembrane regions (helical) follow at residues 20 to 40, 42 to 62, 78 to 109, 123 to 143, and 148 to 168; these read IMLL…WFFG, GTLV…ALVL, ALLT…VIIA, PAMI…TSWL, and IAVN…GHTA. Position 187 is an FMN phosphoryl threonine (threonine 187). A run of 5 helical transmembrane segments spans residues 214–234, 242–262, 267–287, 301–321, and 322–342; these read ILAG…GVWL, WHIP…GWLF, LAAP…FFIL, LIFG…GGYP, and DGVA…DYYT.

Belongs to the NqrB/RnfD family. In terms of assembly, the complex is composed of six subunits: RsxA, RsxB, RsxC, RsxD, RsxE and RsxG. FMN serves as cofactor.

It is found in the cell inner membrane. Its function is as follows. Part of a membrane-bound complex that couples electron transfer with translocation of ions across the membrane. Required to maintain the reduced state of SoxR. The sequence is that of Ion-translocating oxidoreductase complex subunit D from Escherichia coli O6:K15:H31 (strain 536 / UPEC).